The following is a 158-amino-acid chain: NADH-quinone oxidoreductase subunit B (158 aa).

Positions 37, 38, 102, and 132 each coordinate [4Fe-4S] cluster.

Belongs to the complex I 20 kDa subunit family. In terms of assembly, NDH-1 is composed of 14 different subunits. Subunits NuoB, C, D, E, F, and G constitute the peripheral sector of the complex. The cofactor is [4Fe-4S] cluster.

The protein localises to the cell inner membrane. The catalysed reaction is a quinone + NADH + 5 H(+)(in) = a quinol + NAD(+) + 4 H(+)(out). Its function is as follows. NDH-1 shuttles electrons from NADH, via FMN and iron-sulfur (Fe-S) centers, to quinones in the respiratory chain. The immediate electron acceptor for the enzyme in this species is believed to be ubiquinone. Couples the redox reaction to proton translocation (for every two electrons transferred, four hydrogen ions are translocated across the cytoplasmic membrane), and thus conserves the redox energy in a proton gradient. The chain is NADH-quinone oxidoreductase subunit B from Halorhodospira halophila (strain DSM 244 / SL1) (Ectothiorhodospira halophila (strain DSM 244 / SL1)).